The primary structure comprises 245 residues: Endogenous retrovirus group K member 5 Env polyprotein (245 aa).

The interval 1–245 (MVTPVTWMDN…TLEFGLEIKL (245 aa)) is truncated surface protein.

This sequence belongs to the beta type-B retroviral envelope protein family. HERV class-II K(HML-2) env subfamily. In terms of tissue distribution, expressed in lung, placenta, testis, peripheral blood lymphocytes, and teratocarcinoma cell lines.

Its subcellular location is the virion. Its function is as follows. Retroviral envelope proteins mediate receptor recognition and membrane fusion during early infection. Endogenous envelope proteins may have kept, lost or modified their original function during evolution. In Homo sapiens (Human), this protein is Endogenous retrovirus group K member 5 Env polyprotein (ERVK-5).